The primary structure comprises 158 residues: Protein Smg homolog (158 aa).

It belongs to the Smg family.

The chain is Protein Smg homolog from Coxiella burnetii (strain Dugway 5J108-111).